The chain runs to 135 residues: Large ribosomal subunit protein uL16c (135 aa).

The protein belongs to the universal ribosomal protein uL16 family. As to quaternary structure, part of the 50S ribosomal subunit.

It localises to the plastid. Its subcellular location is the chloroplast. The chain is Large ribosomal subunit protein uL16c from Nymphaea alba (White water-lily).